A 259-amino-acid polypeptide reads, in one-letter code: Phosphate import ATP-binding protein PstB (259 aa).

Positions 5 to 248 (IDVSGLHVYY…NKIFTKPEKK (244 aa)) constitute an ABC transporter domain. 37–44 (GSSGCGKS) provides a ligand contact to ATP.

This sequence belongs to the ABC transporter superfamily. Phosphate importer (TC 3.A.1.7) family. The complex is composed of two ATP-binding proteins (PstB), two transmembrane proteins (PstC and PstA) and a solute-binding protein (PstS).

The protein resides in the cell membrane. It catalyses the reaction phosphate(out) + ATP + H2O = ADP + 2 phosphate(in) + H(+). Part of the ABC transporter complex PstSACB involved in phosphate import. Responsible for energy coupling to the transport system. This Thermobifida fusca (strain YX) protein is Phosphate import ATP-binding protein PstB.